The primary structure comprises 303 residues: NAD kinase (303 aa).

The active-site Proton acceptor is the aspartate 85. Residues aspartate 85–glycine 86, arginine 90, asparagine 159–aspartate 160, lysine 187, aspartate 189, alanine 224, and glutamine 259 contribute to the NAD(+) site.

This sequence belongs to the NAD kinase family. Requires a divalent metal cation as cofactor.

It is found in the cytoplasm. The catalysed reaction is NAD(+) + ATP = ADP + NADP(+) + H(+). Involved in the regulation of the intracellular balance of NAD and NADP, and is a key enzyme in the biosynthesis of NADP. Catalyzes specifically the phosphorylation on 2'-hydroxyl of the adenosine moiety of NAD to yield NADP. The polypeptide is NAD kinase (Bdellovibrio bacteriovorus (strain ATCC 15356 / DSM 50701 / NCIMB 9529 / HD100)).